The chain runs to 735 residues: Post-transcriptional regulator MKT1 (735 aa).

The segment at 475-722 is interaction with PBP1; that stretch reads QVIYNTMEET…ANERMKRAQK (248 aa).

This sequence belongs to the XPG/RAD2 endonuclease family. Forms a complex composed of at least MKT1, PBP1, XAC1 and LSM12. Within the complex, interacts (via C-terminus) with PBP1; the interaction is direct. Interacts with RNA-binding protein ZC3H11 (via MKT1-binding motif); the interaction is direct. May interact with RNA-binding proteins CFB1 and CFB2. Interacts with the EIF4E6-EIF4G5 translation initiation complex via EIF4G5; the interaction with EIF4G5 is direct.

It localises to the cytoplasm. The protein localises to the cytosol. Its subcellular location is the stress granule. Functionally, involved in post-transcriptional regulation of gene expression. Promotes mRNA stabilization by recruiting a complex containing PBP1, LSM12 and XAC1 to mRNAs. Recruited to mRNAs by sequence-specific RNA binding proteins. May regulate translation through interactions with the EIF4E6-EIF4G5 translation initiation complex. This Trypanosoma brucei brucei (strain 927/4 GUTat10.1) protein is Post-transcriptional regulator MKT1.